Consider the following 238-residue polypeptide: Phosphoribosylaminoimidazole-succinocarboxamide synthase (238 aa).

This sequence belongs to the SAICAR synthetase family.

It carries out the reaction 5-amino-1-(5-phospho-D-ribosyl)imidazole-4-carboxylate + L-aspartate + ATP = (2S)-2-[5-amino-1-(5-phospho-beta-D-ribosyl)imidazole-4-carboxamido]succinate + ADP + phosphate + 2 H(+). Its pathway is purine metabolism; IMP biosynthesis via de novo pathway; 5-amino-1-(5-phospho-D-ribosyl)imidazole-4-carboxamide from 5-amino-1-(5-phospho-D-ribosyl)imidazole-4-carboxylate: step 1/2. The sequence is that of Phosphoribosylaminoimidazole-succinocarboxamide synthase from Desulfitobacterium hafniense (strain Y51).